A 145-amino-acid polypeptide reads, in one-letter code: Small ribosomal subunit protein bS16 (145 aa).

Residues 82 to 145 are disordered; that stretch reads IKERAATNNP…EAAAEEQTEA (64 aa). Residues 95-115 show a composition bias toward basic and acidic residues; it reads EPGKKAKERAEERAEKAREAA. A compositionally biased stretch (low complexity) spans 116–137; it reads EAAAAAAAAPAEEAAAEAPAEA.

This sequence belongs to the bacterial ribosomal protein bS16 family.

This is Small ribosomal subunit protein bS16 from Novosphingobium aromaticivorans (strain ATCC 700278 / DSM 12444 / CCUG 56034 / CIP 105152 / NBRC 16084 / F199).